Consider the following 123-residue polypeptide: Protein Wnt-3a (123 aa).

A lipid anchor (O-palmitoleoyl serine) is attached at serine 1. Residues cysteine 89 and cysteine 104 are joined by a disulfide bond. A glycan (N-linked (GlcNAc...) asparagine) is linked at asparagine 90.

It belongs to the Wnt family. In terms of processing, disulfide bonds have critical and distinct roles in secretion and activity. Loss of each conserved cysteine results in high molecular weight oxidized Wnt oligomers, which are formed through inter-Wnt disulfide bonding. Palmitoleoylation is required for efficient binding to frizzled receptors. Depalmitoleoylation leads to Wnt signaling pathway inhibition.

Its subcellular location is the secreted. The protein resides in the extracellular space. It localises to the extracellular matrix. Its function is as follows. Ligand for members of the frizzled family of seven transmembrane receptors. Functions in the canonical Wnt signaling pathway that results in activation of transcription factors of the TCF/LEF family. Required for normal embryonic mesoderm development and formation of caudal somites. Required for normal morphogenesis of the developing neural tube. The sequence is that of Protein Wnt-3a (WNT-3A) from Pituophis melanoleucus (Pine snake).